The primary structure comprises 786 residues: Toll-like receptor 1 (786 aa).

Positions 1 to 24 (MTSIFHFAIIFMLILQIRIQLSEE) are cleaved as a signal peptide. The Extracellular portion of the chain corresponds to 25–580 (SEFLVDRSKN…HMSELSCNIT (556 aa)). Asn51 carries an N-linked (GlcNAc...) asparagine glycan. 19 LRR repeats span residues 54–77 (QNYI…LIIS), 78–101 (HNRI…LDLS), 102–125 (HNKL…SFNA), 126–150 (FDAL…STTH), 151–175 (LEKS…GETY), 176–199 (GEKE…FPTN), 200–223 (KEFH…NIKC), 224–250 (VLED…SNLT), 251–278 (LNNI…YFSI), 279–308 (SNVK…HQVV), 309–337 (SDVF…SGTR), 338–361 (MVHM…NLLT), 362–388 (DTVF…KELS), 389–414 (KIAE…SYDE), 415–437 (KKGD…ILTD), 438–457 (TIFR…SNKI), 458–478 (KSIP…VAFN), 479–500 (SLTD…IDHN), and 501–524 (SVSH…AGDN). Cys110 and Cys132 form a disulfide bridge. Asn137 and Asn163 each carry an N-linked (GlcNAc...) asparagine glycan. Residues Cys223 and Cys230 are joined by a disulfide bond. An interaction with bacterial lipopeptide region spans residues 313-316 (GFPQ). N-linked (GlcNAc...) asparagine glycosylation is present at Asn330. A disulfide bridge links Cys343 with Cys368. An intrachain disulfide couples Cys419 to Cys442. Asn429 carries N-linked (GlcNAc...) asparagine glycosylation. In terms of domain architecture, LRRCT spans 525 to 579 (PFQCTCELGEFVKNIDQVSSEVLEGWPDSYKCDYPESYRGTLLKDFHMSELSCNI). Asn578 carries N-linked (GlcNAc...) asparagine glycosylation. A helical membrane pass occupies residues 581 to 601 (LLIVTIVATMLVLAVTVTSLC). Residues 602–786 (SYLDLPWYLR…NIKLTEQAKK (185 aa)) are Cytoplasmic-facing. One can recognise a TIR domain in the interval 635-776 (LQFHAFISYS…LFWANLRAAI (142 aa)).

This sequence belongs to the Toll-like receptor family. As to quaternary structure, interacts (via extracellular domain) with TLR2. TLR2 seems to exist in heterodimers with either TLR1 or TLR6 before stimulation by the ligand. The heterodimers form bigger oligomers in response to their corresponding ligands as well as further heterotypic associations with other receptors such as CD14 and/or CD36. The activation cluster TLR2:TLR1:CD14 forms in response to triacylated lipopeptides. Binds MYD88 (via TIR domain). Interacts with CNPY3. Interacts with neutrophil recruitment protein from Aedes aegypti saliva; the interaction probably promotes activation of canonical NF-kappa-B signaling in skin-resident macrophages and subsequent expression of neutrophil chemoattractants. Ubiquitous. Highly expressed in spleen, ovary, peripheral blood leukocytes, thymus and small intestine.

It localises to the cell membrane. It is found in the cytoplasmic vesicle. Its subcellular location is the phagosome membrane. The protein localises to the membrane raft. The protein resides in the golgi apparatus. Participates in the innate immune response to microbial agents. Specifically recognizes diacylated and triacylated lipopeptides. Cooperates with TLR2 to mediate the innate immune response to bacterial lipoproteins or lipopeptides. Forms the activation cluster TLR2:TLR1:CD14 in response to triacylated lipopeptides, this cluster triggers signaling from the cell surface and subsequently is targeted to the Golgi in a lipid-raft dependent pathway. Acts via MYD88 and TRAF6, leading to NF-kappa-B activation, cytokine secretion and the inflammatory response. This is Toll-like receptor 1 (TLR1) from Homo sapiens (Human).